A 616-amino-acid chain; its full sequence is MAU2 chromatid cohesion factor homolog (616 aa).

3 TPR repeats span residues 90-123 (FDTA…SQHN), 445-478 (GSFY…ANAE), and 485-518 (SCSL…ASKI).

This sequence belongs to the SCC4/mau-2 family. In terms of assembly, component of the cohesin loading complex.

The protein localises to the nucleus. Its subcellular location is the nucleoplasm. In terms of biological role, required for association of the cohesin complex with chromatin during interphase. Plays a role in sister chromatid cohesion and normal progression through prometaphase. This Culex quinquefasciatus (Southern house mosquito) protein is MAU2 chromatid cohesion factor homolog.